The sequence spans 459 residues: Cysteine--tRNA ligase (459 aa).

Cysteine 27 contacts Zn(2+). The 'HIGH' region motif lies at 29-39; it reads PTVYNFVHIGN. Zn(2+) is bound by residues cysteine 211, histidine 236, and glutamate 240. The short motif at 269–273 is the 'KMSKS' region element; the sequence is KMSKS. Lysine 272 serves as a coordination point for ATP.

It belongs to the class-I aminoacyl-tRNA synthetase family. Monomer. Zn(2+) is required as a cofactor.

It localises to the cytoplasm. The enzyme catalyses tRNA(Cys) + L-cysteine + ATP = L-cysteinyl-tRNA(Cys) + AMP + diphosphate. The protein is Cysteine--tRNA ligase of Ehrlichia canis (strain Jake).